The sequence spans 153 residues: Ribosome maturation factor RimP (153 aa).

This sequence belongs to the RimP family.

It localises to the cytoplasm. Required for maturation of 30S ribosomal subunits. The protein is Ribosome maturation factor RimP of Clostridium botulinum (strain Okra / Type B1).